The following is a 263-amino-acid chain: Endonuclease 8 (263 aa).

The active-site Schiff-base intermediate with DNA is P2. Residue E3 is the Proton donor of the active site. K53 functions as the Proton donor; for beta-elimination activity in the catalytic mechanism. DNA-binding residues include Q70, R125, and N169. The segment at K229–H263 adopts an FPG-type zinc-finger fold. R253 functions as the Proton donor; for delta-elimination activity in the catalytic mechanism.

This sequence belongs to the FPG family. Zn(2+) serves as cofactor.

The catalysed reaction is 2'-deoxyribonucleotide-(2'-deoxyribose 5'-phosphate)-2'-deoxyribonucleotide-DNA = a 3'-end 2'-deoxyribonucleotide-(2,3-dehydro-2,3-deoxyribose 5'-phosphate)-DNA + a 5'-end 5'-phospho-2'-deoxyribonucleoside-DNA + H(+). In terms of biological role, involved in base excision repair of DNA damaged by oxidation or by mutagenic agents. Acts as a DNA glycosylase that recognizes and removes damaged bases. Has a preference for oxidized pyrimidines, such as thymine glycol, 5,6-dihydrouracil and 5,6-dihydrothymine. Has AP (apurinic/apyrimidinic) lyase activity and introduces nicks in the DNA strand. Cleaves the DNA backbone by beta-delta elimination to generate a single-strand break at the site of the removed base with both 3'- and 5'-phosphates. This Escherichia coli O127:H6 (strain E2348/69 / EPEC) protein is Endonuclease 8.